We begin with the raw amino-acid sequence, 469 residues long: Ribulose bisphosphate carboxylase large chain (469 aa).

The residue at position 5 (K5) is an N6,N6,N6-trimethyllysine. Substrate-binding residues include N114 and T164. The active-site Proton acceptor is K166. Residue K168 participates in substrate binding. Positions 192, 194, and 195 each coordinate Mg(2+). K192 carries the N6-carboxylysine modification. H285 functions as the Proton acceptor in the catalytic mechanism. Positions 286, 318, and 370 each coordinate substrate.

The protein belongs to the RuBisCO large chain family. Type I subfamily. As to quaternary structure, heterohexadecamer of 8 large chains and 8 small chains; disulfide-linked. The disulfide link is formed within the large subunit homodimers. Mg(2+) serves as cofactor. In terms of processing, the disulfide bond which can form in the large chain dimeric partners within the hexadecamer appears to be associated with oxidative stress and protein turnover.

The protein resides in the plastid. Its subcellular location is the chloroplast. The catalysed reaction is 2 (2R)-3-phosphoglycerate + 2 H(+) = D-ribulose 1,5-bisphosphate + CO2 + H2O. It carries out the reaction D-ribulose 1,5-bisphosphate + O2 = 2-phosphoglycolate + (2R)-3-phosphoglycerate + 2 H(+). Its function is as follows. RuBisCO catalyzes two reactions: the carboxylation of D-ribulose 1,5-bisphosphate, the primary event in carbon dioxide fixation, as well as the oxidative fragmentation of the pentose substrate in the photorespiration process. Both reactions occur simultaneously and in competition at the same active site. This Fleroya rubrostipulata (Mitragyna rubrostipulata) protein is Ribulose bisphosphate carboxylase large chain.